Consider the following 265-residue polypeptide: V0 assembly protein 1 (265 aa).

An N-terminal signal peptide occupies residues 1-24 (MVFGQLYALFIFTLSCCISKTVQA). Topologically, residues 25–223 (DSSKESSSFI…ILSSIWTEGL (199 aa)) are vacuolar. Asn69, Asn104, and Asn172 each carry an N-linked (GlcNAc...) asparagine glycan. The helical transmembrane segment at 224–244 (LMCLIVSALLLFILIVALSWI) threads the bilayer. The Cytoplasmic segment spans residues 245-265 (SNLDITYGALEKSTNPIKKNN). The ER retention motif motif lies at 262–265 (KKNN).

Belongs to the VOA1 family. V-ATPase is a heteromultimeric enzyme composed of a peripheral catalytic V1 complex (components A to H) attached to an integral membrane V0 proton pore complex (components: a, c, c', c'', d, e, f and VOA1). Interacts with VMA21. Associates with the assembling V0 complex.

Its subcellular location is the vacuole membrane. It is found in the endoplasmic reticulum membrane. Functionally, accessory component of the V0 complex of vacuolar(H+)-ATPase (V-ATPase), a multisubunit enzyme composed of a peripheral complex (V1) that hydrolyzes ATP and a membrane integral complex (V0) that translocates protons. V-ATPase is responsible for acidifying and maintaining the pH of intracellular compartments. Functions with VMA21 in assembly of the V0 complex. The polypeptide is V0 assembly protein 1 (VOA1) (Saccharomyces cerevisiae (strain ATCC 204508 / S288c) (Baker's yeast)).